Reading from the N-terminus, the 303-residue chain is Putative HTH-type transcriptional regulatory protein Mpal_0031 (303 aa).

Positions 132 to 189 (LRGLREQRNMSLGDLGAVLGVSRRTISKYESGMGTTLEIAIKIEEVFDSGVIESIDLL) constitute an HTH cro/C1-type domain. The segment at residues 143-162 (LGDLGAVLGVSRRTISKYES) is a DNA-binding region (H-T-H motif).

The polypeptide is Putative HTH-type transcriptional regulatory protein Mpal_0031 (Methanosphaerula palustris (strain ATCC BAA-1556 / DSM 19958 / E1-9c)).